We begin with the raw amino-acid sequence, 155 residues long: uncharacterized protein (155 aa).

The next 4 helical transmembrane spans lie at 2–24 (TFLF…PPIF), 62–84 (AVVN…YLVL), 97–116 (VFLI…FLVV), and 131–148 (VVLL…KVFN).

The protein resides in the cell membrane. This is an uncharacterized protein from Aquifex aeolicus (strain VF5).